The following is a 746-amino-acid chain: Steroid receptor seven-up, isoform A (746 aa).

Residues 38 to 191 (PPHSAWHEPP…HSQSSNSGSQ (154 aa)) are disordered. The segment covering 56–68 (AASAGPGTTTGSV) has biased composition (low complexity). The segment covering 83–101 (QQSAVIKQDLSCPSLNQAG) has biased composition (polar residues). The span at 122–141 (GSAGGHHSGSGSGSGSGVNP) shows a compositional bias: gly residues. Residues 158–170 (MLTSIKGQPTGCG) are compositionally biased toward polar residues. A compositionally biased stretch (low complexity) spans 171–191 (STTPSSQANSSHSQSSNSGSQ). The segment at residues 197-272 (NIECVVCGDK…MGMRREAVQR (76 aa)) is a DNA-binding region (nuclear receptor). NR C4-type zinc fingers lie at residues 200-220 (CVVC…CEGC) and 236-260 (CRGS…LKKC). The 250-residue stretch at 307–556 (YLSSYISLLL…PLVPSAGSAF (250 aa)) folds into the NR LBD domain. Residues 579–645 (QATPPSSGGG…APAPVPTSSV (67 aa)) form a disordered region. Residues 592–605 (GHNNSSGLGASLPT) are compositionally biased toward polar residues. Residues 606 to 645 (QSQSGSSSRNLTASPLSTSLATAPAPASASAPAPVPTSSV) show a composition bias toward low complexity.

This sequence belongs to the nuclear hormone receptor family. NR2 subfamily. Expressed in several embryonic tissues; dorsal vessel, oenocyte and fat body. CNS expression is dynamic and confined to temporally restricted subsections of the NB lineage; expressed in many NB and GMCs, but only a small number of neurons.

The protein localises to the nucleus. Its function is as follows. Receptor that is required in photoreceptors R1, R3, R4 and R6 during eye development; generation of the ganglion mother cell-2 (GMC-2) fate in the nb7-3 lineage, coinciding with the transition in the expression of HB to KR in the neuroblasts (NBs). The polypeptide is Steroid receptor seven-up, isoform A (svp) (Drosophila melanogaster (Fruit fly)).